Here is a 492-residue protein sequence, read N- to C-terminus: Protein adenylyltransferase Fic (492 aa).

Positions 1 to 18 are enriched in low complexity; that stretch reads MGTEAEQPSPPAQQQDQE. A disordered region spans residues 1-26; the sequence is MGTEAEQPSPPAQQQDQENPPLCKAQ. Residues 33 to 55 traverse the membrane as a helical segment; the sequence is LYRFVLIFVAGSLAAWTFHALSS. TPR repeat units follow at residues 118-151 and 152-186; these read ALGALRMAQDLYLAGKDDKAARLFEHALALAPRH and PEVLLRYGEFLEHNQRNIVLADQYYFQALTISPSN. The short motif at 243–248 is the Inhibitory (S/T)XXXE(G/N) motif element; it reads SVGIEG. ATP-binding positions include E247 and 328–331; that span reads VGGH. A Fido domain is found at 297–432; the sequence is ITIKDILELH…IRPFVRFIAD (136 aa). H375 is a catalytic residue. Residues 379-386, 411-412, and N419 each bind ATP; these read DGNGRTSR and YY.

Belongs to the fic family. In terms of assembly, homodimer; homodimerization may regulate adenylyltransferase and phosphodiesterase activities.

It localises to the membrane. The catalysed reaction is L-tyrosyl-[protein] + ATP = O-(5'-adenylyl)-L-tyrosyl-[protein] + diphosphate. The enzyme catalyses L-threonyl-[protein] + ATP = 3-O-(5'-adenylyl)-L-threonyl-[protein] + diphosphate. It carries out the reaction 3-O-(5'-adenylyl)-L-threonyl-[protein] + H2O = L-threonyl-[protein] + AMP + H(+). The side chain of Glu-247 determines which of the two opposing activities (AMPylase or de-AMPylase) will take place. In response to endoplasmic reticulum stress, mediates de-AMPylase activity. Adenylyltransferase activity is inhibited by the inhibitory helix present at the N-terminus: Glu-247 binds ATP and competes with ATP-binding at Arg-386, thereby preventing adenylyltransferase activity. In unstressed cells, disengagement of Glu-247 promotes adenylyltransferase activity. Activation dissociates ATP-binding from Glu-247, allowing ordered binding of the entire ATP moiety with the alpha-phosphate in an orientation that is productive for accepting an incoming target hydroxyl side chain. Functionally, protein that can both mediate the addition of adenosine 5'-monophosphate (AMP) to specific residues of target proteins (AMPylation), and the removal of the same modification from target proteins (de-AMPylation), depending on the context. The side chain of Glu-247 determines which of the two opposing activities (AMPylase or de-AMPylase) will take place. Acts as a key regulator of the unfolded protein response (UPR) by mediating AMPylation or de-AMPylation of Hsc70-3/BiP. In unstressed cells, acts as an adenylyltransferase by mediating AMPylation of Hsc70-3/BiP at 'Thr-518', thereby inactivating it. In response to endoplasmic reticulum stress, acts as a phosphodiesterase by mediating removal of ATP (de-AMPylation) from Hsc70-3/BiP at 'Thr-518', leading to restore HSPA5/BiP activity. In Drosophila melanogaster (Fruit fly), this protein is Protein adenylyltransferase Fic.